A 703-amino-acid polypeptide reads, in one-letter code: Elongation factor G 1 (703 aa).

The 284-residue stretch at 8 to 291 (ERYRNIGISA…AVIDYLPSPV (284 aa)) folds into the tr-type G domain. GTP is bound by residues 17 to 24 (AHIDAGKT), 88 to 92 (DTPGH), and 142 to 145 (NKMD).

It belongs to the TRAFAC class translation factor GTPase superfamily. Classic translation factor GTPase family. EF-G/EF-2 subfamily.

It localises to the cytoplasm. In terms of biological role, catalyzes the GTP-dependent ribosomal translocation step during translation elongation. During this step, the ribosome changes from the pre-translocational (PRE) to the post-translocational (POST) state as the newly formed A-site-bound peptidyl-tRNA and P-site-bound deacylated tRNA move to the P and E sites, respectively. Catalyzes the coordinated movement of the two tRNA molecules, the mRNA and conformational changes in the ribosome. The chain is Elongation factor G 1 from Burkholderia orbicola (strain AU 1054).